A 61-amino-acid polypeptide reads, in one-letter code: Conotoxin LiC32 (61 aa).

An N-terminal signal peptide occupies residues 1 to 22 (MRCVPVFIILLLLSPSAPSVDA). Residues 23 to 44 (HPKTKDDVPLASFHDDAKRTLQ) constitute a propeptide that is removed on maturation. The residue at position 60 (C60) is a Cysteine amide.

This sequence belongs to the conotoxin T superfamily. Post-translationally, contains 2 disulfide bonds that can be either 'C1-C3, C2-C4' or 'C1-C4, C2-C3', since these disulfide connectivities have been observed for conotoxins with cysteine framework V (for examples, see AC P0DQQ7 and AC P81755). Expressed by the venom duct.

It is found in the secreted. Its function is as follows. Has the ability to interact with the G-protein coupled somatostatin type 3 receptor (SSTR3). The ability was measured in competition binding experiments and the constant of inhibition (Ki) has been evaluated to be 3.5 uM. The polypeptide is Conotoxin LiC32 (Conus lividus (Livid cone)).